Reading from the N-terminus, the 98-residue chain is Acylphosphatase (98 aa).

The Acylphosphatase-like domain maps to 10 to 96 (ARLLRIRGRV…TDGAGFDCLP (87 aa)). Residues arginine 25 and asparagine 43 contribute to the active site.

Belongs to the acylphosphatase family.

The catalysed reaction is an acyl phosphate + H2O = a carboxylate + phosphate + H(+). In Azoarcus sp. (strain BH72), this protein is Acylphosphatase (acyP).